A 337-amino-acid chain; its full sequence is MDLDQIVADAQQSFEGAADITTLENEKARFLGKSGALTELLKGLGKLDPEARKTEGARINVAKQQVEAALNARRQALADALLNQRLAAEAIDVTLPGRGAGAGSLHPVMRTWERVEQIFRSIGFDVADGPEIETDWYNFTALNSPENHPARSMQDTFYVDGKDADGRRLLLRTHTSPMQVRYARMNRPPIKVIAPGRTYRVDSDATHSPMFNQVEGLWIDENVSFADLKGVYTDFLKKFFERDDILVRFRPSYFPFTEPSAEIDMMFEHGKNAGKWLEISGSGQVHPTVIRNMGLDPERYIGFAFGSGLERLTMLRYGVQDLRLFFENDLRFLRQFA.

A Mg(2+)-binding site is contributed by glutamate 258.

Belongs to the class-II aminoacyl-tRNA synthetase family. Phe-tRNA synthetase alpha subunit type 1 subfamily. As to quaternary structure, tetramer of two alpha and two beta subunits. Mg(2+) serves as cofactor.

The protein localises to the cytoplasm. It catalyses the reaction tRNA(Phe) + L-phenylalanine + ATP = L-phenylalanyl-tRNA(Phe) + AMP + diphosphate + H(+). This is Phenylalanine--tRNA ligase alpha subunit from Burkholderia thailandensis (strain ATCC 700388 / DSM 13276 / CCUG 48851 / CIP 106301 / E264).